Consider the following 546-residue polypeptide: Histidine--tRNA ligase, mitochondrial (546 aa).

Residues 1 to 20 (MLSRSLNKVVTSIKSSSIIR) constitute a mitochondrion transit peptide. L-histidine-binding positions include 129 to 131 (DLT), Arg-156, Gln-172, Asp-176, Arg-326, and 330 to 331 (YY).

Belongs to the class-II aminoacyl-tRNA synthetase family.

It localises to the cytoplasm. Its subcellular location is the mitochondrion. The catalysed reaction is tRNA(His) + L-histidine + ATP = L-histidyl-tRNA(His) + AMP + diphosphate + H(+). Its function is as follows. Catalyzes the aminoacylation of histidyl-tRNA in both the cytoplasm and the mitochondrion. The protein is Histidine--tRNA ligase, mitochondrial (HTS1) of Saccharomyces cerevisiae (strain ATCC 204508 / S288c) (Baker's yeast).